Here is a 140-residue protein sequence, read N- to C-terminus: PGPRVRRKANDFLHRGEYSVCDSEEHWVGNLTQATDLRGNEVTVLPHVRINNVVKKQMFYETTCRVSKPIGAPKPGQGVSGVKAGTSSCRGIDNEHWNSYCTNVHTFVRALTSYKNQIAWRFIRINAACVCVLSRNSWRH.

The propeptide occupies 1-7 (PGPRVRR). 3 disulfides stabilise this stretch: C21/C101, C64/C129, and C89/C131.

It belongs to the NGF-beta family.

It localises to the secreted. This chain is Neurotrophin-7 (ntf7), found in Cyprinus carpio (Common carp).